The sequence spans 200 residues: Protein GrpE (200 aa).

Over residues 1–27 the composition is skewed to basic and acidic residues; it reads MTKQEKAENQEKPTEETVEETPKKETP. A disordered region spans residues 1 to 50; sequence MTKQEKAENQEKPTEETVEETPKKETPFEPVMEADEVEETTEAQAPVEEA. Residues 32–41 are compositionally biased toward acidic residues; it reads MEADEVEETT.

This sequence belongs to the GrpE family. As to quaternary structure, homodimer.

The protein localises to the cytoplasm. Participates actively in the response to hyperosmotic and heat shock by preventing the aggregation of stress-denatured proteins, in association with DnaK and GrpE. It is the nucleotide exchange factor for DnaK and may function as a thermosensor. Unfolded proteins bind initially to DnaJ; upon interaction with the DnaJ-bound protein, DnaK hydrolyzes its bound ATP, resulting in the formation of a stable complex. GrpE releases ADP from DnaK; ATP binding to DnaK triggers the release of the substrate protein, thus completing the reaction cycle. Several rounds of ATP-dependent interactions between DnaJ, DnaK and GrpE are required for fully efficient folding. In Latilactobacillus sakei subsp. sakei (strain 23K) (Lactobacillus sakei subsp. sakei), this protein is Protein GrpE.